Consider the following 118-residue polypeptide: Large ribosomal subunit protein uL18 (118 aa).

Residues 1 to 25 (MISKPDKNKLRQKRHRRVRGKLSGT) are disordered. Positions 10–20 (LRQKRHRRVRG) are enriched in basic residues.

Belongs to the universal ribosomal protein uL18 family. As to quaternary structure, part of the 50S ribosomal subunit; part of the 5S rRNA/L5/L18/L25 subcomplex. Contacts the 5S and 23S rRNAs.

Functionally, this is one of the proteins that bind and probably mediate the attachment of the 5S RNA into the large ribosomal subunit, where it forms part of the central protuberance. This is Large ribosomal subunit protein uL18 from Streptococcus pneumoniae (strain Hungary19A-6).